The chain runs to 318 residues: NLP effector protein 7 (318 aa).

The signal sequence occupies residues 1-19 (MRLFAFLWSSVAFLSTVQA). Over residues 23 to 41 (QTASQTQDDSSTPTPTPTD) the composition is skewed to low complexity. 2 disordered regions span residues 23–42 (QTASQTQDDSSTPTPTPTDK) and 51–96 (RTKT…TPDP). The segment covering 55 to 65 (PMATPNRTIMP) has biased composition (polar residues). A glycan (N-linked (GlcNAc...) asparagine) is linked at Asn-60. The segment covering 73–96 (TEPPTPEPTYLPTPSPTPAPTPDP) has biased composition (pro residues). The Conserved undecapeptide motif I signature appears at 185-195 (AIMYSWYFPKD). Residues 202–208 (GHRHDWE) carry the Hepta-peptide GHRHDWE motif II motif.

The protein belongs to the Necrosis inducing protein (NPP1) family.

The protein localises to the secreted. Its function is as follows. Secreted effector that contributes moderately to virulence during infection by P.capsici. Does not cause visible reaction of C.annuum for several days after inoculation, but by 7 days after inoculation, small necrotic lesions become visible. Leads only to chlorotic areas, without necrosis at 7 days after non-host N.benthamiana leaves infection. This Phytophthora capsici protein is NLP effector protein 7.